A 42-amino-acid polypeptide reads, in one-letter code: Crotamine Ile-19 (42 aa).

3 disulfide bridges follow: Cys-4–Cys-36, Cys-11–Cys-30, and Cys-18–Cys-37.

This sequence belongs to the crotamine-myotoxin family. Monomer. In terms of tissue distribution, expressed by the venom gland.

The protein resides in the secreted. Cationic peptide that possesses multiple functions. It acts as a cell-penetrating peptide (CPP), and as a potent voltage-gated potassium channel (Kv) inhibitor, it induces severe muscle necrosis by a non-enzymatic mechanism and exhibits antimicrobial activities. It also elicits a short-lasting hyperextension of the hind limb. It does not cause observable tissue damage (whereas the whole venom causes severe myonecrosis accompanied by edema and hemorrhage). The protein is Crotamine Ile-19 of Crotalus durissus ruruima (South American rattlesnake).